The following is a 205-amino-acid chain: Small ribosomal subunit protein uS4 (205 aa).

The disordered stretch occupies residues 20–47; it reads WGRSKSPLNRGKENPPGQHGQRRKKPSD. The 61-residue stretch at 94–154 folds into the S4 RNA-binding domain; that stretch reads CRLDAVVYRL…TKSKDMALIL (61 aa).

This sequence belongs to the universal ribosomal protein uS4 family. In terms of assembly, part of the 30S ribosomal subunit. Contacts protein S5. The interaction surface between S4 and S5 is involved in control of translational fidelity.

One of the primary rRNA binding proteins, it binds directly to 16S rRNA where it nucleates assembly of the body of the 30S subunit. Its function is as follows. With S5 and S12 plays an important role in translational accuracy. The chain is Small ribosomal subunit protein uS4 from Paramagnetospirillum magneticum (strain ATCC 700264 / AMB-1) (Magnetospirillum magneticum).